The primary structure comprises 251 residues: Chlorocatechol 1,2-dioxygenase (251 aa).

Residues Tyr130, Tyr164, His188, and His190 each coordinate Fe cation.

Belongs to the intradiol ring-cleavage dioxygenase family. The cofactor is Fe(3+).

The enzyme catalyses 3-chlorocatechol + O2 = (2E,4Z)-2-chloromuconate + 2 H(+). It catalyses the reaction 3,4-dichlorocatechol + O2 = (2Z,4Z)-2,3-dichloromuconate + 2 H(+). The catalysed reaction is 3,5-dichlorocatechol + O2 = (2E,4E)-2,4-dichloromuconate + 2 H(+). It carries out the reaction 3,6-dichlorocatechol + O2 = (2E,4E)-2,5-dichloromuconate + H(+). The enzyme catalyses 3,4,6-trichlorocatechol + O2 = (2Z,4E)-2,3,5-trichloromuconate + H(+). It functions in the pathway xenobiotic degradation. Its function is as follows. Chlorocatechol 1,2-dioxygenase involved in the degradation of chlorinated benzenes, that occurs via chlorocatechol intermediates. Displays broad substrate specificity. Preferentially cleaves 3-chlorocatechol and 3,4-dichlorocatechol, and shows lower activity on 3,5-dichlorocatechol, 3,6-dichlorocatechol and 3,4,6-trichlorocatechol in vitro. Is not able to convert 3,4,5-trichlorocatechol and 3,4,5,6-tetrachlorocatechol. Thus, probably functions in the degradation pathways of 1,2-dichlorobenzene, 1,4-dichlorobenzene and 1,2,4-trichlorobenzene (via 3,4-dichlorocatechol, 3,6-dichlorocatechol and 3,4,6-trichlorocatechol intermediates, respectively), which allow Pseudomonas sp. strain P51 to grow on these substrates as the sole carbon and energy source. The sequence is that of Chlorocatechol 1,2-dioxygenase from Pseudomonas sp. (strain P51).